The chain runs to 218 residues: Imidazole glycerol phosphate synthase subunit HisH (218 aa).

A Glutamine amidotransferase type-1 domain is found at 12 to 218; that stretch reads SIVVVDYGLG…RNFVDYCADQ (207 aa). Cysteine 88 serves as the catalytic Nucleophile. Catalysis depends on residues histidine 196 and glutamate 198.

In terms of assembly, heterodimer of HisH and HisF.

It localises to the cytoplasm. The catalysed reaction is 5-[(5-phospho-1-deoxy-D-ribulos-1-ylimino)methylamino]-1-(5-phospho-beta-D-ribosyl)imidazole-4-carboxamide + L-glutamine = D-erythro-1-(imidazol-4-yl)glycerol 3-phosphate + 5-amino-1-(5-phospho-beta-D-ribosyl)imidazole-4-carboxamide + L-glutamate + H(+). It carries out the reaction L-glutamine + H2O = L-glutamate + NH4(+). It functions in the pathway amino-acid biosynthesis; L-histidine biosynthesis; L-histidine from 5-phospho-alpha-D-ribose 1-diphosphate: step 5/9. In terms of biological role, IGPS catalyzes the conversion of PRFAR and glutamine to IGP, AICAR and glutamate. The HisH subunit catalyzes the hydrolysis of glutamine to glutamate and ammonia as part of the synthesis of IGP and AICAR. The resulting ammonia molecule is channeled to the active site of HisF. This chain is Imidazole glycerol phosphate synthase subunit HisH, found in Halobacterium salinarum (strain ATCC 700922 / JCM 11081 / NRC-1) (Halobacterium halobium).